Reading from the N-terminus, the 157-residue chain is Small ribosomal subunit protein uS7 (157 aa).

Belongs to the universal ribosomal protein uS7 family. In terms of assembly, part of the 30S ribosomal subunit. Contacts proteins S9 and S11.

One of the primary rRNA binding proteins, it binds directly to 16S rRNA where it nucleates assembly of the head domain of the 30S subunit. Is located at the subunit interface close to the decoding center, probably blocks exit of the E-site tRNA. The protein is Small ribosomal subunit protein uS7 of Pseudomonas fluorescens (strain Pf0-1).